The chain runs to 1374 residues: Protein Dicer (1374 aa).

The Helicase ATP-binding domain occupies 19–206 (VYNIASKQNT…YHRLYQWEQL (188 aa)). 32–39 (MRTGAGKT) provides a ligand contact to ATP. Positions 145–148 (DECH) match the DECH box motif. A Helicase C-terminal domain is found at 340 to 517 (DVTDKVFKLL…SLVCEERERV (178 aa)). In terms of domain architecture, Dicer dsRNA-binding fold spans 537-628 (AVSLLYNFCN…KPLDFRRKIA (92 aa)). RNase III domains follow at residues 916 to 1038 (QALT…LDSG) and 1083 to 1233 (SSYI…LDSG). Mg(2+) is bound by residues Glu-1123, Asp-1219, and Glu-1222. Residues 1263-1355 (EHKVYQLLKD…LLYSCNCKFS (93 aa)) form a C-terminal dsRNA-binding fold region. Cys-1275, His-1312, Cys-1350, and Cys-1352 together coordinate Zn(2+).

It belongs to the helicase family. Dicer subfamily. It depends on Mg(2+) as a cofactor. Mn(2+) is required as a cofactor.

It is found in the cytoplasm. The protein localises to the nucleus. In terms of biological role, required for G1 arrest and mating in response to nitrogen starvation. Ago1 regulation of cytokinesis and cell cycle checkpoints occurs downstream of dcr1. Required, indirectly, for regulated hyperphosphorylation of cdc2. Functionally, has a role in the RNA interference (RNAi) pathway which is important for heterochromatin formation, accurate chromosome segregation, centromere cohesion and telomere function during mitosis and meiosis. Digests double-stranded RNA (dsRNA) producing 21 to 23 bp dsRNAs, so-called interfering RNAs (siRNA). Required for both post-transcriptional and transcriptional gene silencing. Required for silencing at the centromeres and for initiation of transcriptionally silent heterochromatin at the mating type locus. Promotes histone H3 'Lys-10' methylation necessary for centromere function. Required for recruitment of swi6 and cohesin to an ectopic dg repeat. The protein is Protein Dicer (dcr1) of Schizosaccharomyces pombe (strain 972 / ATCC 24843) (Fission yeast).